The primary structure comprises 138 residues: Protein Rrf1 (138 aa).

A Response regulatory domain is found at arginine 4–leucine 116. A 4-aspartylphosphate mark is found at aspartate 13 and aspartate 53.

Its function is as follows. May be involved in regulation of gene transcription. Belongs to the family of response regulators, and members of this family involved in the regulation of gene transcription are two-domain proteins. This protein contains only the N-terminal phosphorylation domain and not the C-terminal DNA-binding domain but it may bind to Rrf2 protein and the latter may bind to DNA. The protein is Protein Rrf1 (rrf1) of Nitratidesulfovibrio vulgaris (strain ATCC 29579 / DSM 644 / CCUG 34227 / NCIMB 8303 / VKM B-1760 / Hildenborough) (Desulfovibrio vulgaris).